A 361-amino-acid polypeptide reads, in one-letter code: MPLERLNFLGLRNLAALDMRPGPGINLITGANGSGKTSLLEGMHVLGMARSFRTQKLKHAIAHDADAVTLHGRVAGDPPVALGVRRARDASELEIRLDGERGVRVARLAEALPLQLINPDAFRLLEGSPAARREFLDWGVFHVKHEFFEAWRRVRRALKHRNALLRHDRIDARSMRVWEQELAHWSELLDALRSEYMAQFAKAFEDTLHELLPLSGLSLRYYRGWDKQRGLLEVLEGGRDTDRQMGFTQQGPQRADLRLRIGKRAAVEELSRGQQKLVVSALKLAQGRLLDELTGRTCVYLIDDLPAELDVTHRRIFCHWLERLRCQVFITSVEREALANAWQSETDVAMFHVEHGRLLTE.

An ATP-binding site is contributed by 30–37 (GANGSGKT).

This sequence belongs to the RecF family.

The protein localises to the cytoplasm. Its function is as follows. The RecF protein is involved in DNA metabolism; it is required for DNA replication and normal SOS inducibility. RecF binds preferentially to single-stranded, linear DNA. It also seems to bind ATP. The polypeptide is DNA replication and repair protein RecF (Chromohalobacter salexigens (strain ATCC BAA-138 / DSM 3043 / CIP 106854 / NCIMB 13768 / 1H11)).